A 200-amino-acid chain; its full sequence is MSFSPLIRQLIDALRILPGVGQKTAQRMALQLLERDRSGGTRLAQALSQAMEGVGHCRQCRTLTEQELCPQCADPRRDDTQLCVVEGPVDVYAVEQTGYRGRYFVLKGHLSPLDGLGPEAIGIPQLMARIEEQGTFSEVILATNPTVEGEATAHYIAQLLAEKGLTATRIAHGVPLGGELELVDGGTLAHAFAGRRPIAL.

A C4-type zinc finger spans residues cysteine 57–cysteine 72. The Toprim domain maps to threonine 80–proline 175.

The protein belongs to the RecR family.

May play a role in DNA repair. It seems to be involved in an RecBC-independent recombinational process of DNA repair. It may act with RecF and RecO. This Pseudomonas entomophila (strain L48) protein is Recombination protein RecR.